Reading from the N-terminus, the 377-residue chain is Succinyl-diaminopimelate desuccinylase (377 aa).

His-68 lines the Zn(2+) pocket. Asp-70 is an active-site residue. Position 101 (Asp-101) interacts with Zn(2+). Glu-135 acts as the Proton acceptor in catalysis. Zn(2+)-binding residues include Glu-136, Glu-164, and His-350.

It belongs to the peptidase M20A family. DapE subfamily. In terms of assembly, homodimer. Requires Zn(2+) as cofactor. The cofactor is Co(2+).

The enzyme catalyses N-succinyl-(2S,6S)-2,6-diaminopimelate + H2O = (2S,6S)-2,6-diaminopimelate + succinate. It functions in the pathway amino-acid biosynthesis; L-lysine biosynthesis via DAP pathway; LL-2,6-diaminopimelate from (S)-tetrahydrodipicolinate (succinylase route): step 3/3. In terms of biological role, catalyzes the hydrolysis of N-succinyl-L,L-diaminopimelic acid (SDAP), forming succinate and LL-2,6-diaminopimelate (DAP), an intermediate involved in the bacterial biosynthesis of lysine and meso-diaminopimelic acid, an essential component of bacterial cell walls. The sequence is that of Succinyl-diaminopimelate desuccinylase from Vibrio vulnificus (strain CMCP6).